The following is a 584-amino-acid chain: MKDSFKNSWAIYRRLLGYLLGYWKVLLLSMLSMAVAALTEPAVAKLLKPLIDGGFVNKDPQVIMWVPLAIIGIYLIRGLAGFINEYTASWLTGQLVQRLRQQMFAKLVNLPARYYDEHQSGRLMSRITNDVNQVTEAGFNVITVTVRDGLTALGMLGLMLTTDWQLTLICLVVMPAVTYCMRLVGQRLRGLARQNQQHMAQMTQVLAESIQCQRAIKVYGGQEREMARFDHTATSVRRNQVKQSAASAANTGVTQLMIACALAAILYFAGLRAQHGGLTAGDFMVFLTAMLGLFAPVKRISSVSQAMQRGLAAAESVFAFIDEPGEPDDGASALPATRGRLSFDAVSFAYPNVDSPALSGIDLEIQPGETVALVGSSGSGKTTLASLVPRFYEPSAGRLLLDGVPLADIPLRQLRGHIALVSQQVELFNDTVAANIAYGREDASREEIVEAARAANAMEFIEGLPDGLETVIGENGARLSGGQRQRLAIARALLKNAPLLILDEATSALDTQSERLVQAALENLMKNRTTIVIAHRLSTIENADRIVVMHQGRLAEQGRHQALLEQGGLYARLHSLQFSEPQAD.

The next 5 membrane-spanning stretches (helical) occupy residues 15–35 (LLGYLLGYWKVLLLSMLSMAV), 63–83 (IMWVPLAIIGIYLIRGLAGFI), 153–173 (LGMLGLMLTTDWQLTLICLVV), 251–271 (TGVTQLMIACALAAILYFAGL), and 277–297 (GLTAGDFMVFLTAMLGLFAPV). Residues 27–309 (LLSMLSMAVA…ISSVSQAMQR (283 aa)) form the ABC transmembrane type-1 domain. Positions 341–576 (LSFDAVSFAY…GGLYARLHSL (236 aa)) constitute an ABC transporter domain. 375–382 (GSSGSGKT) provides a ligand contact to ATP.

The protein belongs to the ABC transporter superfamily. Lipid exporter (TC 3.A.1.106) family. As to quaternary structure, homodimer.

The protein localises to the cell inner membrane. It carries out the reaction ATP + H2O + lipid A-core oligosaccharideSide 1 = ADP + phosphate + lipid A-core oligosaccharideSide 2.. Functionally, involved in lipopolysaccharide (LPS) biosynthesis. Translocates lipid A-core from the inner to the outer leaflet of the inner membrane. Transmembrane domains (TMD) form a pore in the inner membrane and the ATP-binding domain (NBD) is responsible for energy generation. The sequence is that of ATP-dependent lipid A-core flippase from Chromobacterium violaceum (strain ATCC 12472 / DSM 30191 / JCM 1249 / CCUG 213 / NBRC 12614 / NCIMB 9131 / NCTC 9757 / MK).